A 1405-amino-acid polypeptide reads, in one-letter code: DNA-directed RNA polymerase subunit beta' (1405 aa).

Residues Cys65, Cys67, Cys80, and Cys83 each contribute to the Zn(2+) site. Mg(2+) contacts are provided by Asp468, Asp470, and Asp472. The Zn(2+) site is built by Cys811, Cys885, Cys892, and Cys895.

This sequence belongs to the RNA polymerase beta' chain family. In terms of assembly, the RNAP catalytic core consists of 2 alpha, 1 beta, 1 beta' and 1 omega subunit. When a sigma factor is associated with the core the holoenzyme is formed, which can initiate transcription. Mg(2+) serves as cofactor. Zn(2+) is required as a cofactor.

It catalyses the reaction RNA(n) + a ribonucleoside 5'-triphosphate = RNA(n+1) + diphosphate. Its function is as follows. DNA-dependent RNA polymerase catalyzes the transcription of DNA into RNA using the four ribonucleoside triphosphates as substrates. The sequence is that of DNA-directed RNA polymerase subunit beta' from Azobacteroides pseudotrichonymphae genomovar. CFP2.